We begin with the raw amino-acid sequence, 544 residues long: Chaperonin GroEL (544 aa).

Residues 30 to 33, Lys-51, 87 to 91, Gly-415, 480 to 482, and Asp-496 contribute to the ATP site; these read TLGP, DGTTT, and DAA.

Belongs to the chaperonin (HSP60) family. Forms a cylinder of 14 subunits composed of two heptameric rings stacked back-to-back. Interacts with the co-chaperonin GroES.

The protein localises to the cytoplasm. The catalysed reaction is ATP + H2O + a folded polypeptide = ADP + phosphate + an unfolded polypeptide.. Its function is as follows. Together with its co-chaperonin GroES, plays an essential role in assisting protein folding. The GroEL-GroES system forms a nano-cage that allows encapsulation of the non-native substrate proteins and provides a physical environment optimized to promote and accelerate protein folding. In Sulfurihydrogenibium sp. (strain YO3AOP1), this protein is Chaperonin GroEL.